The chain runs to 772 residues: LGALVVALCALSPPARAATASRGAPQARAPQGRVSPMRPSTMVVEHPEFLKAGKEPGLQIWRVEKFDLVPVPPNLYGDFFTGDAYVILKTVQLRNGNLQYDLHYWLGNECSQDESGAAAIFTVQLDDYLNGRAVQHREVQGFESATFLGYFKSGLKYKKGGVASGFKHVVPNEVAVQRLFQVKGRRVVRATEVPVSWESFNRGDCFILDLGNDIYQWCGSNSNRYERLKATQVSKGIRDNERSGRAHVHVSEEDAEPAGMLQVLGPKPTLPEGTEDTVKEDAANRKLAKLYKVSNGAGTMTVSLVADENPFAQGALKSEDCFILDHGKDGKIFVWKGKQANTEERKAALKTASDFISKMNYPKQTQVSVLPEGGETPLFKQFFKNWRDPDQVDGPGLSYLSSHIANVERVPFDAATLHTSTAMAAQHGMDDDGTGQKQIWRIEGSNKVPVDPATYGQFYGGDSYIILYNYRHGGRQGQIIYNWQGAQSTQDEVAASAILTAQLDEELGGTPVQSRVVQGKEPAHLMSLFGGKPMIIYRGGTSREGGQTAPASTRLFQVRASSSGATRAVEVIPKAGALNSNDAFVLKTPSAAYLWVGTGASEAEKTGAQELLRVLRAQPVQVAEGSEPDSFWEALGGKAAYRTSPRLKDKKMDAHPPRLFACSNKIGRFVVEEVPGELMQEDLATDDVMLLDTWDQVFVWVGKDSQEEEKTEALTSAKRYIETDPANRDRRTPINVVKQGFEPPSFVGWFLGWDDNYWSVDPLDRAIAELAA.

Positions leucine 1–alanine 17 are cleaved as a signal peptide. Residues alanine 18–arginine 33 constitute a propeptide that is removed on maturation. The interval threonine 19–arginine 38 is disordered. The tract at residues threonine 41–phenylalanine 166 is actin-severing. The stretch at phenylalanine 66–leucine 148 is one Gelsolin-like 1 repeat. Tyrosine 76 is subject to Phosphotyrosine. Residues glycine 82, aspartate 83, glutamate 114, aspartate 126, glycine 131, and alanine 133 each coordinate Ca(2+). The interval aspartate 113–glycine 116 is actin-actin interfilament contact point. Lysine 152–lysine 159 is an a 1,2-diacyl-sn-glycero-3-phospho-(1D-myo-inositol-4,5-bisphosphate) binding site. Valine 162 is a binding site for Ca(2+). Residue arginine 178 to arginine 186 coordinates a 1,2-diacyl-sn-glycero-3-phospho-(1D-myo-inositol-4,5-bisphosphate). Residues valine 188–methionine 260 form a Gelsolin-like 2 repeat. Positions 203 and 204 each coordinate Ca(2+). An intrachain disulfide couples cysteine 205 to cysteine 218. Ca(2+)-binding residues include glutamate 226, aspartate 276, glutamate 319, aspartate 320, and glutamate 344. The stretch at aspartate 307–phenylalanine 379 is one Gelsolin-like 3 repeat. A phosphotyrosine mark is found at tyrosine 399 and tyrosine 455. Residues alanine 424–alanine 772 form an actin-binding, Ca-sensitive region. One copy of the Gelsolin-like 4 repeat lies at serine 445–methionine 526. Positions 461, 462, 492, 504, 509, 511, and 541 each coordinate Ca(2+). One copy of the Gelsolin-like 5 repeat lies at arginine 567–tryptophan 632. Lysine 574 carries the N6-acetyllysine modification. Residues asparagine 581 and aspartate 582 each contribute to the Ca(2+) site. At tyrosine 593 the chain carries Phosphotyrosine. Glutamate 604 serves as a coordination point for Ca(2+). Tyrosine 641 is subject to Phosphotyrosine. Residues valine 671 to phenylalanine 746 form a Gelsolin-like 6 repeat. Residues aspartate 686, aspartate 687, and glutamate 709 each contribute to the Ca(2+) site. Residue threonine 732 is modified to Phosphothreonine.

The protein belongs to the villin/gelsolin family. In terms of assembly, binds to actin and to fibronectin. Identified in a complex composed of ACTA1, COBL, GSN and TMSB4X. Interacts with the inactive form of EIF2AK2/PKR. Interacts with FLII. Phosphorylated on tyrosine residues in vitro.

It is found in the cytoplasm. The protein localises to the cytoskeleton. Its subcellular location is the secreted. Calcium-regulated, actin-modulating protein that binds to the plus (or barbed) ends of actin monomers or filaments, preventing monomer exchange (end-blocking or capping). It can promote the assembly of monomers into filaments (nucleation) as well as sever filaments already formed. Plays a role in ciliogenesis. The protein is Gelsolin (GSN) of Sus scrofa (Pig).